The sequence spans 630 residues: Elongation factor 4 (630 aa).

The interval 1 to 22 is disordered; sequence MTVARNRAGAGPGKGSPISSFA. One can recognise a tr-type G domain in the interval 30–211; sequence ARIRNFCIIA…EVVRQVPAPV (182 aa). GTP contacts are provided by residues 42 to 47 and 158 to 161; these read DHGKST and NKID.

Belongs to the TRAFAC class translation factor GTPase superfamily. Classic translation factor GTPase family. LepA subfamily.

The protein localises to the cell membrane. The enzyme catalyses GTP + H2O = GDP + phosphate + H(+). Required for accurate and efficient protein synthesis under certain stress conditions. May act as a fidelity factor of the translation reaction, by catalyzing a one-codon backward translocation of tRNAs on improperly translocated ribosomes. Back-translocation proceeds from a post-translocation (POST) complex to a pre-translocation (PRE) complex, thus giving elongation factor G a second chance to translocate the tRNAs correctly. Binds to ribosomes in a GTP-dependent manner. The sequence is that of Elongation factor 4 from Rhodococcus opacus (strain B4).